The sequence spans 163 residues: Nucleotide-binding protein PMI0103 (163 aa).

It belongs to the YajQ family.

Functionally, nucleotide-binding protein. The chain is Nucleotide-binding protein PMI0103 from Proteus mirabilis (strain HI4320).